The sequence spans 280 residues: MMRAKAYAAGTVLNALPTGIGSAFGIEMHTIVKLRPSDELKVFVNGVERRSIVAERILNSMDVTAEVIVESEIPGGSGLGSSSAFVNALICAVKKMKGEELNAFEILRSNARFSLEAGISYTGAFDDASASMLGGFVVSDNRKMRLIRTDEFEGYSAVLIPKFSRGKVDWRRLRERASEVEGAVEAAMRGEYCKAMKLNTEYICKMLGYPLEIAEKGWEKGICCGISGNGPSYVAFGSKNEMEALAETWGEYGRVYVRRVADEPAEDVVIPTPFFRKLDG.

Residue 74 to 84 participates in ATP binding; sequence PGGSGLGSSSA.

The protein belongs to the GHMP kinase family. Archaeal shikimate kinase subfamily.

It is found in the cytoplasm. It carries out the reaction shikimate + ATP = 3-phosphoshikimate + ADP + H(+). It participates in metabolic intermediate biosynthesis; chorismate biosynthesis; chorismate from D-erythrose 4-phosphate and phosphoenolpyruvate: step 5/7. This Archaeoglobus fulgidus (strain ATCC 49558 / DSM 4304 / JCM 9628 / NBRC 100126 / VC-16) protein is Shikimate kinase (aroK).